A 199-amino-acid polypeptide reads, in one-letter code: Dephospho-CoA kinase (199 aa).

Positions 3–199 (VLGLTGSIGM…AAAKMPRRRD (197 aa)) constitute a DPCK domain. 11 to 16 (GMGKST) contacts ATP.

This sequence belongs to the CoaE family.

It is found in the cytoplasm. It catalyses the reaction 3'-dephospho-CoA + ATP = ADP + CoA + H(+). Its pathway is cofactor biosynthesis; coenzyme A biosynthesis; CoA from (R)-pantothenate: step 5/5. Functionally, catalyzes the phosphorylation of the 3'-hydroxyl group of dephosphocoenzyme A to form coenzyme A. This Rhodopseudomonas palustris (strain ATCC BAA-98 / CGA009) protein is Dephospho-CoA kinase.